The following is a 104-amino-acid chain: Large ribosomal subunit protein uL24 (104 aa).

The protein belongs to the universal ribosomal protein uL24 family. As to quaternary structure, part of the 50S ribosomal subunit.

Functionally, one of two assembly initiator proteins, it binds directly to the 5'-end of the 23S rRNA, where it nucleates assembly of the 50S subunit. In terms of biological role, one of the proteins that surrounds the polypeptide exit tunnel on the outside of the subunit. This Chromobacterium violaceum (strain ATCC 12472 / DSM 30191 / JCM 1249 / CCUG 213 / NBRC 12614 / NCIMB 9131 / NCTC 9757 / MK) protein is Large ribosomal subunit protein uL24.